The primary structure comprises 185 residues: MRTHIDDSASGKNHHLPMLWFFDSSLRLCAIPLSVATMWITVTNKEDNSSYGMLKYNNLSALKYMVLVSALCACYALLAAACSLVRCFVSKAWIFFVSDQIVAYLAITSVAAVMEMYYLAYNGAKEDSWSEACSSYGSFCSKVKLALILHTITFCCFFVIAVISAFRAFSVFDPPFVNSQEVQGD.

At 1-15 the chain is on the cytoplasmic side; sequence MRTHIDDSASGKNHH. The helical transmembrane segment at 16 to 36 threads the bilayer; that stretch reads LPMLWFFDSSLRLCAIPLSVA. Topologically, residues 37–64 are extracellular; the sequence is TMWITVTNKEDNSSYGMLKYNNLSALKY. Asparagine 48 and asparagine 58 each carry an N-linked (GlcNAc...) asparagine glycan. The helical transmembrane segment at 65–85 threads the bilayer; it reads MVLVSALCACYALLAAACSLV. At 86-92 the chain is on the cytoplasmic side; the sequence is RCFVSKA. Residues 93–113 traverse the membrane as a helical segment; sequence WIFFVSDQIVAYLAITSVAAV. At 114 to 145 the chain is on the extracellular side; the sequence is MEMYYLAYNGAKEDSWSEACSSYGSFCSKVKL. A helical membrane pass occupies residues 146–166; it reads ALILHTITFCCFFVIAVISAF. Residues 167–185 are Cytoplasmic-facing; that stretch reads RAFSVFDPPFVNSQEVQGD.

Belongs to the Casparian strip membrane proteins (CASP) family. As to quaternary structure, homodimer and heterodimers.

The protein resides in the cell membrane. The protein is CASP-like protein 2D1 of Glycine max (Soybean).